The following is a 227-amino-acid chain: Agamous-like MADS-box protein AGL17 (227 aa).

In terms of domain architecture, MADS-box spans 3 to 57 (RGKIVIQKIDDSTSRQVTFSKRRKGLIKKAKELAILCDAEVCLIIFSNTDKLYDF). Residues 86–176 (VKFWQREAET…SRKVQRIHQE (91 aa)) form the K-box domain.

As to expression, preferentially expressed in roots.

It localises to the nucleus. Functionally, probable transcription factor. This chain is Agamous-like MADS-box protein AGL17 (AGL17), found in Arabidopsis thaliana (Mouse-ear cress).